The primary structure comprises 381 residues: Arf-GAP with dual PH domain-containing protein 2 (381 aa).

The Arf-GAP domain maps to 9-131; the sequence is KRLLELLRAP…FMADGETISL (123 aa). Residues 25–48 form a C4-type zinc finger; that stretch reads CADCGAADPDWASYKLGIFICLNC. PH domains follow at residues 132–233 and 255–361; these read PGNR…AARL and NYLK…GVLS.

As to expression, highly expressed in placenta, spleen, kidney, skeletal muscle and adrenal gland. Weakly expressed in thyroid, liver, heart, lung, small intestine, peripheral blood leukocytes. Not detected in spinal cord, brain, stomach, trachea, colon, lymph node and bone marrow.

The protein resides in the cytoplasm. Its subcellular location is the cell membrane. GTPase-activating protein for the ADP ribosylation factor family (Potential). Binds phosphatidylinositol 3,4,5-trisphosphate (PtdInsP3) and inositol 1,3,4,5-tetrakisphosphate (InsP4). Possesses a stoichiometry of two binding sites for InsP4 with identical affinity. The chain is Arf-GAP with dual PH domain-containing protein 2 (ADAP2) from Homo sapiens (Human).